The following is a 513-amino-acid chain: Na(+)/H(+) antiporter NhaB (513 aa).

12 consecutive transmembrane segments (helical) span residues 23–43, 52–72, 97–117, 120–140, 144–164, 202–222, 238–258, 303–323, 348–368, 391–411, 447–467, and 475–495; these read LALI…PFVA, IFTL…LLAI, LLLM…LFIF, LLLS…AAAF, FLDA…FYGI, LMMH…VGEP, FFLR…LTCL, AIIG…VGLI, TESL…AVII, LFYI…VGTI, ATPN…APLI, and VWMA…CVEF.

Belongs to the NhaB Na(+)/H(+) (TC 2.A.34) antiporter family.

The protein resides in the cell inner membrane. The enzyme catalyses 2 Na(+)(in) + 3 H(+)(out) = 2 Na(+)(out) + 3 H(+)(in). Functionally, na(+)/H(+) antiporter that extrudes sodium in exchange for external protons. The sequence is that of Na(+)/H(+) antiporter NhaB from Shigella sonnei (strain Ss046).